We begin with the raw amino-acid sequence, 292 residues long: Acetylglutamate kinase (292 aa).

Substrate is bound by residues 64 to 65, arginine 86, and asparagine 190; that span reads GG.

The protein belongs to the acetylglutamate kinase family. ArgB subfamily.

Its subcellular location is the cytoplasm. The catalysed reaction is N-acetyl-L-glutamate + ATP = N-acetyl-L-glutamyl 5-phosphate + ADP. It functions in the pathway amino-acid biosynthesis; L-arginine biosynthesis; N(2)-acetyl-L-ornithine from L-glutamate: step 2/4. In terms of biological role, catalyzes the ATP-dependent phosphorylation of N-acetyl-L-glutamate. The chain is Acetylglutamate kinase from Geotalea uraniireducens (strain Rf4) (Geobacter uraniireducens).